A 355-amino-acid chain; its full sequence is tRNA (guanine-N(1)-)-methyltransferase (355 aa).

S-adenosyl-L-methionine contacts are provided by residues Gly-109 and 129 to 134; that span reads IGDYVL.

It belongs to the RNA methyltransferase TrmD family. Homodimer.

It localises to the cytoplasm. The catalysed reaction is guanosine(37) in tRNA + S-adenosyl-L-methionine = N(1)-methylguanosine(37) in tRNA + S-adenosyl-L-homocysteine + H(+). Specifically methylates guanosine-37 in various tRNAs. This is tRNA (guanine-N(1)-)-methyltransferase from Chlamydia abortus (strain DSM 27085 / S26/3) (Chlamydophila abortus).